The primary structure comprises 225 residues: Peptidyl-tRNA hydrolase (225 aa).

Tyrosine 14 lines the tRNA pocket. Histidine 19 serves as the catalytic Proton acceptor. Residues phenylalanine 64, asparagine 66, and asparagine 112 each coordinate tRNA. Residues alanine 184–arginine 225 form a disordered region. Residues alanine 198–alanine 210 show a composition bias toward low complexity.

This sequence belongs to the PTH family. As to quaternary structure, monomer.

It is found in the cytoplasm. It carries out the reaction an N-acyl-L-alpha-aminoacyl-tRNA + H2O = an N-acyl-L-amino acid + a tRNA + H(+). Functionally, hydrolyzes ribosome-free peptidyl-tRNAs (with 1 or more amino acids incorporated), which drop off the ribosome during protein synthesis, or as a result of ribosome stalling. Catalyzes the release of premature peptidyl moieties from peptidyl-tRNA molecules trapped in stalled 50S ribosomal subunits, and thus maintains levels of free tRNAs and 50S ribosomes. The sequence is that of Peptidyl-tRNA hydrolase from Cereibacter sphaeroides (strain KD131 / KCTC 12085) (Rhodobacter sphaeroides).